We begin with the raw amino-acid sequence, 447 residues long: Pup--protein ligase 2 (447 aa).

Glu4 contacts Mg(2+). Position 48 (Arg48) interacts with ATP. Tyr50 contacts Mg(2+). Asp52 serves as the catalytic Proton acceptor. Mg(2+) is bound at residue Glu58. ATP contacts are provided by Thr61 and Trp414.

It belongs to the Pup ligase/Pup deamidase family. Pup-conjugating enzyme subfamily.

The catalysed reaction is ATP + [prokaryotic ubiquitin-like protein]-L-glutamate + [protein]-L-lysine = ADP + phosphate + N(6)-([prokaryotic ubiquitin-like protein]-gamma-L-glutamyl)-[protein]-L-lysine.. It participates in protein degradation; proteasomal Pup-dependent pathway. Its pathway is protein modification; protein pupylation. Functionally, catalyzes the covalent attachment of the prokaryotic ubiquitin-like protein modifier Pup to the proteasomal substrate proteins, thereby targeting them for proteasomal degradation. This tagging system is termed pupylation. The ligation reaction involves the side-chain carboxylate of the C-terminal glutamate of Pup and the side-chain amino group of a substrate lysine. In Rhodococcus erythropolis (Arthrobacter picolinophilus), this protein is Pup--protein ligase 2.